The chain runs to 463 residues: Glutamate--tRNA ligase 1 (463 aa).

A 'HIGH' region motif is present at residues 10–20 (PSPTGYLHIGG). A 'KMSKS' region motif is present at residues 238–242 (KLSKR). ATP is bound at residue Lys-241.

This sequence belongs to the class-I aminoacyl-tRNA synthetase family. Glutamate--tRNA ligase type 1 subfamily. Monomer.

It is found in the cytoplasm. It catalyses the reaction tRNA(Glu) + L-glutamate + ATP = L-glutamyl-tRNA(Glu) + AMP + diphosphate. Its function is as follows. Catalyzes the attachment of glutamate to tRNA(Glu) in a two-step reaction: glutamate is first activated by ATP to form Glu-AMP and then transferred to the acceptor end of tRNA(Glu). The sequence is that of Glutamate--tRNA ligase 1 from Helicobacter pylori (strain ATCC 700392 / 26695) (Campylobacter pylori).